A 490-amino-acid chain; its full sequence is MDKVTDNSPDVESTESTEGSFPTVGVDTGDTITATLATGTENVGGGGGAFGGASESSAAIHATAKWSTAQLKKHQAEQAARAAAAEAALAKAKSQRDALTQRLKDIVNDALRANAARSPSVTDLAHANNMAMQAEAERLRLAKAEQKAREEAEAAEKALREAERQRDEIARQQAETAHLLAMAEAAEAEKNRQDSLDEEHRAVEVAEKKLAEAKAELAKAESDVQSKQAIVSRVAGELENAQKSVDVKVTGFPGWRDVQKKLERQLQDKKNEYSSVTNALNSAVSIRDAKKTDVQNAEIKLKEAKDALEKSQVKDSVDTMVGFYQYITEQYGEKYSRIAQDLAEKAKGSKFSSVDEALAAFEKYKNVLDKKISKVDRDAIFNALESVNYDELSKNLTKISKSLKITSRVSFLYDVGSDFKNAIETGNWRPLFVTLEKSAVDVGVAKIVALMFSFIVGVPLGFWGIAIVTGIVSSYIGDDELNKLNELLGI.

The span at 1–20 shows a compositional bias: polar residues; sequence MDKVTDNSPDVESTESTEGS. Disordered regions lie at residues 1 to 29 and 146 to 171; these read MDKV…VDTG and QKAR…EIAR. Residues 146–170 are compositionally biased toward basic and acidic residues; it reads QKAREEAEAAEKALREAERQRDEIA. The helical transmembrane segment at 447–467 threads the bilayer; that stretch reads IVALMFSFIVGVPLGFWGIAI.

Belongs to the channel forming colicin family.

It localises to the host membrane. In terms of biological role, this colicin is a channel-forming colicin. This class of transmembrane toxins depolarize the cytoplasmic membrane, leading to dissipation of cellular energy. Its function is as follows. Colicins are polypeptide toxins produced by and active against E.coli and closely related bacteria. The protein is Colicin-5 (cfa) of Escherichia coli.